A 243-amino-acid chain; its full sequence is Max-interacting protein 1 (243 aa).

Positions 76–128 constitute a bHLH domain; it reads HYRSTHNELEKNRRAHLRLCLERLKTLIPLGPECSRHTTLGLLNKAKAHIKKL. Residues 164–235 are disordered; it reads EAERIRTDSM…TASDEGYSSC (72 aa). Acidic residues predominate over residues 188-198; sequence DQEEMEVDVES. Residues 222-235 are compositionally biased toward polar residues; it reads SLQSTASDEGYSSC.

Efficient DNA binding requires dimerization with another bHLH protein. Binds DNA as a heterodimer with MAX.

The protein localises to the nucleus. Its function is as follows. Transcriptional repressor. MXI1 binds with MAX to form a sequence-specific DNA-binding protein complex which recognizes the core sequence 5'-CAC[GA]TG-3'. MXI1 thus antagonizes MYC transcriptional activity by competing for MAX. This is Max-interacting protein 1 (mxi1) from Danio rerio (Zebrafish).